Consider the following 147-residue polypeptide: Large ribosomal subunit protein uL13 (147 aa).

This sequence belongs to the universal ribosomal protein uL13 family. Part of the 50S ribosomal subunit.

In terms of biological role, this protein is one of the early assembly proteins of the 50S ribosomal subunit, although it is not seen to bind rRNA by itself. It is important during the early stages of 50S assembly. The chain is Large ribosomal subunit protein uL13 from Nocardia farcinica (strain IFM 10152).